The primary structure comprises 395 residues: MAKEKFNRSKPHVNIGTIGHVDHGKTTLTAAITAVLAKKGLSEVKSFDQIDNAPEEKERGITINTAHVEYETETRHYAHVDCPGHADYVKNMVTGAAQMDGAIIVVAATDGPMPQTREHILLARQVNVPKLVVFMNKVDIVDDPEMLELVEMEMRELLDFYQFDGTNTPIIRGSALGGANGDPKWEAKIMELMDAIDNWIPLPQRDIDKSFLMPVEDVFSITGRGTVATGRIETGLVRTGDEVQIIGLDANGKKSVVTGVEMFRKILDEGQAGDNVGLLLRGVDKDEVKRGMVITHPNKVKPHTKVKAEVYILKKEEGGRHTPFHNKYRPQFYVRTLDVTGEITLPEGTEMVMPGDNVTITIELIYPVACNEGLRFAIREGGRTVGAGQITEIIE.

The tr-type G domain maps to 10–204 (KPHVNIGTIG…AIDNWIPLPQ (195 aa)). The tract at residues 19–26 (GHVDHGKT) is G1. 19-26 (GHVDHGKT) provides a ligand contact to GTP. A Mg(2+)-binding site is contributed by Thr-26. The interval 60–64 (GITIN) is G2. A G3 region spans residues 81–84 (DCPG). Residues 81-85 (DCPGH) and 136-139 (NKVD) contribute to the GTP site. Residues 136 to 139 (NKVD) are G4. The segment at 174–176 (SAL) is G5.

This sequence belongs to the TRAFAC class translation factor GTPase superfamily. Classic translation factor GTPase family. EF-Tu/EF-1A subfamily. In terms of assembly, monomer.

The protein resides in the cytoplasm. The catalysed reaction is GTP + H2O = GDP + phosphate + H(+). GTP hydrolase that promotes the GTP-dependent binding of aminoacyl-tRNA to the A-site of ribosomes during protein biosynthesis. In Azobacteroides pseudotrichonymphae genomovar. CFP2, this protein is Elongation factor Tu.